The following is a 204-amino-acid chain: HTH-type transcriptional activator BcrR (204 aa).

Topologically, residues 1 to 81 are cytoplasmic; it reads MEFNEKLQQL…ETENRSNLKK (81 aa). The 55-residue stretch at 7 to 61 folds into the HTH cro/C1-type domain; sequence LQQLRTGKNLTQEQLAEQLYVSRTAISKWESGKGYPNMESLKCISKFFSVTIDEL. The H-T-H motif DNA-binding region spans 18–37; that stretch reads QEQLAEQLYVSRTAISKWES. A helical transmembrane segment spans residues 82-102; it reads IYNYIYGILDMMAVAFIFLPL. The Extracellular portion of the chain corresponds to 103-126; the sequence is YGNSVGGYVYAVNLLSFTATTPFN. Residues 127-147 traverse the membrane as a helical segment; sequence LAVYWSAFAALIIIGIGKIIS. Residues 148–154 lie on the Cytoplasmic side of the membrane; it reads THLDKEK. The chain crosses the membrane as a helical span at residues 155-175; it reads WGGIATKCSLTITALAVCFFA. Over 176–181 the chain is Extracellular; that stretch reads AAREPY. The chain crosses the membrane as a helical span at residues 182–202; that stretch reads ITVLVFLLLIGKIFVWIKQMG. The Cytoplasmic portion of the chain corresponds to 203-204; the sequence is MK.

It is found in the cell membrane. With respect to regulation, constitutively bound to the bcrABD promoter. Requires bacitracin for activation, probably through a conformational change, such as the oligomerization of inactive dimers to form active tetramers. In terms of biological role, functions both as a membrane-bound sensor and a transducer of bacitracin availability to activate transcription of the bcrABD operon in the presence of bacitracin. Binds specifically to two inverted repeat sequences on the bcrABD promoter, irrespective of bacitracin concentration. This Enterococcus faecalis (Streptococcus faecalis) protein is HTH-type transcriptional activator BcrR.